Here is a 219-residue protein sequence, read N- to C-terminus: Melanoma-associated antigen H1 (219 aa).

Basic residues predominate over residues 1-13 (MPRGRKSRRRRNA). A disordered region spans residues 1 to 84 (MPRGRKSRRR…QKPSVPRSNF (84 aa)). Residues 1–198 (MPRGRKSRRR…KDWPCNYDWD (198 aa)) form the MAGE domain. Residues 44–57 (PEDDLSGPEEDPST) are compositionally biased toward acidic residues. A compositionally biased stretch (low complexity) spans 58 to 74 (PEEASTTPEEASSTAQA). Tyr-195 is subject to Phosphotyrosine.

This is Melanoma-associated antigen H1 (MAGEH1) from Homo sapiens (Human).